The chain runs to 1426 residues: ABC transporter G family member 31 (1426 aa).

N-linked (GlcNAc...) asparagine glycans are attached at residues Asn-6 and Asn-150. The ABC transporter 1 domain occupies 160 to 434; that stretch reads LSSLRIIKPR…FESLGFRLPP (275 aa). Residue 193–200 participates in ATP binding; it reads GPPGSGKS. Asn-219 is a glycosylation site (N-linked (GlcNAc...) asparagine). Thr-276 is modified (phosphothreonine). The ABC transmembrane type-2 1 domain occupies 512-725; it reads ENLKVCFVRE…GQRAIAVNEF (214 aa). 6 helical membrane passes run 530 to 550, 569 to 589, 618 to 638, 649 to 669, 675 to 695, and 760 to 780; these read FLYT…ATVF, CLFF…PLMI, VPYS…TVGL, MLLL…MASL, IANT…GFVI, and IGIA…TLAL. The 253-residue stretch at 826 to 1078 folds into the ABC transporter 2 domain; it reads MTFHNVNYYV…VLVDYFQGIN (253 aa). The N-linked (GlcNAc...) asparagine glycan is linked to Asn-856. ATP is bound at residue 871 to 878; sequence GSSGAGKT. In terms of domain architecture, ABC transmembrane type-2 2 spans 1151-1365; that stretch reads SQFLLCLWKQ…TLQGVILSQL (215 aa). 7 helical membrane passes run 1172 to 1192, 1202 to 1222, 1258 to 1278, 1285 to 1305, 1315 to 1335, 1342 to 1362, and 1396 to 1416; these read LVRL…FWDI, LITV…SNAS, IPYI…TIGF, FVLY…YGMM, LAAV…GFLV, VWWI…GVIL, and IGVS…AFAL.

The protein belongs to the ABC transporter superfamily. ABCG family. PDR (TC 3.A.1.205) subfamily. As to expression, expressed in seedlings, stems, leaves, siliques and inflorescence. In seeds, confined to the endosperm. Highly expressed in the tapetum of anthers.

It is found in the cell membrane. The enzyme catalyses abscisate(in) + ATP + H2O = abscisate(out) + ADP + phosphate + H(+). In terms of biological role, together with ABCG25, export abscisic acid (ABA) from the endosperm to deliver it to the embryo via ABCG30 and ABCG40-mediated import to suppress radicle extension and subsequent embryonic growth. Together with ABCG9, involved in pollen coat deposition of steryl glycosides required for pollen fitness. May be a general defense protein. This Arabidopsis thaliana (Mouse-ear cress) protein is ABC transporter G family member 31.